We begin with the raw amino-acid sequence, 223 residues long: Phosphoribosylformylglycinamidine synthase subunit PurQ (223 aa).

Positions 4–223 (RIGVITFPGT…FQSVLSTLVS (220 aa)) constitute a Glutamine amidotransferase type-1 domain. Cys-87 (nucleophile) is an active-site residue. Residues His-195 and Glu-197 contribute to the active site.

As to quaternary structure, part of the FGAM synthase complex composed of 1 PurL, 1 PurQ and 2 PurS subunits.

It is found in the cytoplasm. It carries out the reaction N(2)-formyl-N(1)-(5-phospho-beta-D-ribosyl)glycinamide + L-glutamine + ATP + H2O = 2-formamido-N(1)-(5-O-phospho-beta-D-ribosyl)acetamidine + L-glutamate + ADP + phosphate + H(+). The catalysed reaction is L-glutamine + H2O = L-glutamate + NH4(+). The protein operates within purine metabolism; IMP biosynthesis via de novo pathway; 5-amino-1-(5-phospho-D-ribosyl)imidazole from N(2)-formyl-N(1)-(5-phospho-D-ribosyl)glycinamide: step 1/2. In terms of biological role, part of the phosphoribosylformylglycinamidine synthase complex involved in the purines biosynthetic pathway. Catalyzes the ATP-dependent conversion of formylglycinamide ribonucleotide (FGAR) and glutamine to yield formylglycinamidine ribonucleotide (FGAM) and glutamate. The FGAM synthase complex is composed of three subunits. PurQ produces an ammonia molecule by converting glutamine to glutamate. PurL transfers the ammonia molecule to FGAR to form FGAM in an ATP-dependent manner. PurS interacts with PurQ and PurL and is thought to assist in the transfer of the ammonia molecule from PurQ to PurL. This chain is Phosphoribosylformylglycinamidine synthase subunit PurQ, found in Corynebacterium jeikeium (strain K411).